The chain runs to 364 residues: Probable dual-specificity RNA methyltransferase RlmN (364 aa).

Glu-107 acts as the Proton acceptor in catalysis. Residues His-113–Asp-346 enclose the Radical SAM core domain. A disulfide bridge connects residues Cys-120 and Cys-351. [4Fe-4S] cluster is bound by residues Cys-127, Cys-131, and Cys-134. S-adenosyl-L-methionine contacts are provided by residues Gly-177–Glu-178, Ser-209, Ser-232–His-234, and Asn-308. The active-site S-methylcysteine intermediate is the Cys-351.

Belongs to the radical SAM superfamily. RlmN family. Requires [4Fe-4S] cluster as cofactor.

Its subcellular location is the cytoplasm. The enzyme catalyses adenosine(2503) in 23S rRNA + 2 reduced [2Fe-2S]-[ferredoxin] + 2 S-adenosyl-L-methionine = 2-methyladenosine(2503) in 23S rRNA + 5'-deoxyadenosine + L-methionine + 2 oxidized [2Fe-2S]-[ferredoxin] + S-adenosyl-L-homocysteine. The catalysed reaction is adenosine(37) in tRNA + 2 reduced [2Fe-2S]-[ferredoxin] + 2 S-adenosyl-L-methionine = 2-methyladenosine(37) in tRNA + 5'-deoxyadenosine + L-methionine + 2 oxidized [2Fe-2S]-[ferredoxin] + S-adenosyl-L-homocysteine. Its function is as follows. Specifically methylates position 2 of adenine 2503 in 23S rRNA and position 2 of adenine 37 in tRNAs. Confers resistance to some classes of antibiotics. The sequence is that of Probable dual-specificity RNA methyltransferase RlmN from Staphylococcus aureus (strain bovine RF122 / ET3-1).